Reading from the N-terminus, the 240-residue chain is Ribonuclease 3 (240 aa).

Positions 9 to 141 (VEEFQKKTGI…LLAAIYLDQG (133 aa)) constitute an RNase III domain. Position 54 (Glu-54) interacts with Mg(2+). Asp-58 is a catalytic residue. Residues Asp-127 and Glu-130 each coordinate Mg(2+). The active site involves Glu-130. The region spanning 168–237 (DYKTALQEIV…ARIAYEKLLK (70 aa)) is the DRBM domain.

This sequence belongs to the ribonuclease III family. In terms of assembly, homodimer. Mg(2+) is required as a cofactor.

The protein resides in the cytoplasm. The catalysed reaction is Endonucleolytic cleavage to 5'-phosphomonoester.. Its function is as follows. Digests double-stranded RNA. Involved in the processing of primary rRNA transcript to yield the immediate precursors to the large and small rRNAs (23S and 16S). Processes some mRNAs, and tRNAs when they are encoded in the rRNA operon. Processes pre-crRNA and tracrRNA of type II CRISPR loci if present in the organism. This chain is Ribonuclease 3, found in Thermotoga sp. (strain RQ2).